Here is a 411-residue protein sequence, read N- to C-terminus: Elongation factor Tu, apicoplast (411 aa).

The region spanning 10–214 (KPHVNIGTIG…TVDSYIEKPE (205 aa)) is the tr-type G domain. The segment at 19–26 (GHVDHGKT) is G1. Position 19–26 (19–26 (GHVDHGKT)) interacts with GTP. Residue Thr-26 coordinates Mg(2+). Positions 61-65 (GITIN) are G2. The segment at 82-85 (DCPG) is G3. Residues 82–86 (DCPGH) and 137–140 (NKED) each bind GTP. The G4 stretch occupies residues 137–140 (NKED). Residues 175–177 (SAL) form a G5 region.

It belongs to the TRAFAC class translation factor GTPase superfamily. Classic translation factor GTPase family. EF-Tu/EF-1A subfamily.

The protein resides in the plastid. The protein localises to the apicoplast. The enzyme catalyses GTP + H2O = GDP + phosphate + H(+). GTP hydrolase that promotes the GTP-dependent binding of aminoacyl-tRNA to the A-site of ribosomes during protein biosynthesis. This is Elongation factor Tu, apicoplast (tufA) from Theileria parva (East coast fever infection agent).